A 166-amino-acid polypeptide reads, in one-letter code: Small ribosomal subunit protein uS5 (166 aa).

The S5 DRBM domain occupies Tyr12–Val75.

Belongs to the universal ribosomal protein uS5 family. In terms of assembly, part of the 30S ribosomal subunit. Contacts proteins S4 and S8.

With S4 and S12 plays an important role in translational accuracy. Functionally, located at the back of the 30S subunit body where it stabilizes the conformation of the head with respect to the body. This chain is Small ribosomal subunit protein uS5, found in Pseudomonas savastanoi pv. phaseolicola (strain 1448A / Race 6) (Pseudomonas syringae pv. phaseolicola (strain 1448A / Race 6)).